The sequence spans 235 residues: Putative homeobox-leucine zipper protein ATHB-51 (235 aa).

Residues 74 to 133 (EMIKKKRLTSGQLASLERSFQEEIKLDSDRKVKLSRELGLQPRQIAVWFQNRRARWKAKQ) constitute a DNA-binding region (homeobox). A leucine-zipper region spans residues 134 to 162 (LEQLYDSLRQEYDVVSREKQMLHDEVKKL).

This sequence belongs to the HD-ZIP homeobox family. Class I subfamily. Widely expressed.

It is found in the nucleus. In terms of biological role, putative transcription factor. In Arabidopsis thaliana (Mouse-ear cress), this protein is Putative homeobox-leucine zipper protein ATHB-51 (ATHB-51).